A 428-amino-acid polypeptide reads, in one-letter code: Histone deacetylase 3 (428 aa).

Residues 3 to 316 (KTVAYFYDPD…WTYETSLLVE (314 aa)) are histone deacetylase. Residues His-17, Gly-21, and Lys-25 each contribute to the 1D-myo-inositol 1,4,5,6-tetrakisphosphate site. His-135 is a catalytic residue. Residues Asp-170, His-172, and Asp-259 each contribute to the Zn(2+) site. Arg-265 contributes to the 1D-myo-inositol 1,4,5,6-tetrakisphosphate binding site. Composition is skewed to basic and acidic residues over residues 388–405 (DRTDEADAEERGPEENYS) and 415–428 (DGDHDNDKESDVEI). The interval 388–428 (DRTDEADAEERGPEENYSRPEAPNEFYDGDHDNDKESDVEI) is disordered. Ser-424 carries the post-translational modification Phosphoserine.

This sequence belongs to the histone deacetylase family. HD type 1 subfamily. In terms of assembly, interacts with HDAC7 and HDAC9. Interacts with DAXX, KDM4A, HDAC10 and DACH1. Found in a complex with NCOR1 and NCOR2. Component of the N-Cor repressor complex, at least composed of NCOR1, NCOR2, HDAC3, TBL1X, TBL1R, CORO2A and GPS2. Interacts with BCOR, MJD2A/JHDM3A, NRIP1, PRDM6 and SRY. Interacts with BTBD14B. Interacts with GLIS2. Interacts (via the DNA-binding domain) with NR2C1; the interaction recruits phosphorylated NR2C1 to PML bodies for sumoylation. Component of the Notch corepressor complex. Interacts with CBFA2T3 and NKAP. Interacts with APEX1; the interaction is not dependent on the acetylated status of APEX1. Interacts with ZMYND15. Interacts with SMRT/NCOR2 and BCL6 on DNA enhancer elements. Interacts with INSM1. Interacts with XBP1 isoform 1; the interaction occurs in endothelial cell (EC) under disturbed flow. Interacts (via C-terminus) with CCAR2 (via N-terminus). Interacts with and deacetylates MEF2D. Interacts with BEND3. Interacts with NKAPL. Interacts with DHX36; this interaction occurs in a RNA-dependent manner. Interacts weakly with CRY1; this interaction is enhanced in the presence of FBXL3. Interacts with FBXL3 and BMAL1. Interacts with NCOR1. Interacts with RARA. Interacts with SETD5. (Microbial infection) Interacts with human cytomegalovirus (HHV-5) immediate early protein IE1; this interaction decreases histone acetylation and allows transcriptional activation by the virus. Requires Zn(2+) as cofactor. In terms of processing, sumoylated in vitro. Post-translationally, deubiquitinated on 'Lys-63'-linked ubiquitin chains by USP38; leading to a decreased level of histone acetylation. Widely expressed.

The protein localises to the nucleus. Its subcellular location is the chromosome. The protein resides in the cytoplasm. It is found in the cytosol. It catalyses the reaction N(6)-acetyl-L-lysyl-[histone] + H2O = L-lysyl-[histone] + acetate. The enzyme catalyses N(6)-acetyl-L-lysyl-[protein] + H2O = L-lysyl-[protein] + acetate. It carries out the reaction N(6)-(2E)-butenoyl-L-lysyl-[protein] + H2O = (2E)-2-butenoate + L-lysyl-[protein]. The catalysed reaction is N(6)-(2-hydroxyisobutanoyl)-L-lysyl-[protein] + H2O = 2-hydroxy-2-methylpropanoate + L-lysyl-[protein]. It catalyses the reaction N(6)-[(S)-lactoyl]-L-lysyl-[protein] + H2O = (S)-lactate + L-lysyl-[protein]. Inositol tetraphosphate (1D-myo-inositol 1,4,5,6-tetrakisphosphate) promotes the histone deacetylase activity by acting as an intermolecular glue between HDAC3 and NCOR2, thereby promoting its association with the N-Cor complex, a prerequisite for the histone deacetylase activity. Histone deacetylase that catalyzes the deacetylation of lysine residues on the N-terminal part of the core histones (H2A, H2B, H3 and H4), and some other non-histone substrates. Histone deacetylation gives a tag for epigenetic repression and plays an important role in transcriptional regulation, cell cycle progression and developmental events. Histone deacetylases act via the formation of large multiprotein complexes, such as N-Cor repressor complex, which activate the histone deacetylase activity. Participates in the BCL6 transcriptional repressor activity by deacetylating the H3 'Lys-27' (H3K27) on enhancer elements, antagonizing EP300 acetyltransferase activity and repressing proximal gene expression. Acts as a molecular chaperone for shuttling phosphorylated NR2C1 to PML bodies for sumoylation. Contributes, together with XBP1 isoform 1, to the activation of NFE2L2-mediated HMOX1 transcription factor gene expression in a PI(3)K/mTORC2/Akt-dependent signaling pathway leading to endothelial cell (EC) survival under disturbed flow/oxidative stress. Regulates both the transcriptional activation and repression phases of the circadian clock in a deacetylase activity-independent manner. During the activation phase, promotes the accumulation of ubiquitinated BMAL1 at the E-boxes and during the repression phase, blocks FBXL3-mediated CRY1/2 ubiquitination and promotes the interaction of CRY1 and BMAL1. The NCOR1-HDAC3 complex regulates the circadian expression of the core clock gene BMAL1 and the genes involved in lipid metabolism in the liver. Also functions as a deacetylase for non-histone targets, such as KAT5, MEF2D, MAPK14, RARA and STAT3. Serves as a corepressor of RARA, mediating its deacetylation and repression, leading to inhibition of RARE DNA element binding. In association with RARA, plays a role in the repression of microRNA-10a and thereby in the inflammatory response. In addition to protein deacetylase activity, also acts as a protein-lysine deacylase by recognizing other acyl groups: catalyzes removal of (2E)-butenoyl (crotonyl), lactoyl (lactyl) and 2-hydroxyisobutanoyl (2-hydroxyisobutyryl) acyl groups from lysine residues, leading to protein decrotonylation, delactylation and de-2-hydroxyisobutyrylation, respectively. Catalyzes decrotonylation of MAPRE1/EB1. Mediates delactylation NBN/NBS1, thereby inhibiting DNA double-strand breaks (DSBs) via homologous recombination (HR). This chain is Histone deacetylase 3 (HDAC3), found in Homo sapiens (Human).